We begin with the raw amino-acid sequence, 1131 residues long: Phytochrome a (1131 aa).

The segment covering 1-23 has biased composition (low complexity); sequence MSSSRPAHSSSSSSRTRQSSQAR. Positions 1-26 are disordered; the sequence is MSSSRPAHSSSSSSRTRQSSQARILA. The GAF domain maps to 219–404; that stretch reads SMEALCNTVV…VFAVHVNKEF (186 aa). Cys324 provides a ligand contact to phytochromobilin. 2 PAS domains span residues 620–690 and 750–834; these read VTSE…LQGK and VEGD…LAGE. Residues 904–1124 form the Histidine kinase domain; it reads YMRHAINKPL…TFILTAELAA (221 aa).

It belongs to the phytochrome family. Homodimer. Post-translationally, contains one covalently linked phytochromobilin chromophore.

In terms of biological role, regulatory photoreceptor which exists in two forms that are reversibly interconvertible by light: the Pr form that absorbs maximally in the red region of the spectrum and the Pfr form that absorbs maximally in the far-red region. Photoconversion of Pr to Pfr induces an array of morphogenic responses, whereas reconversion of Pfr to Pr cancels the induction of those responses. Pfr controls the expression of a number of nuclear genes including those encoding the small subunit of ribulose-bisphosphate carboxylase, chlorophyll A/B binding protein, protochlorophyllide reductase, rRNA, etc. It also controls the expression of its own gene(s) in a negative feedback fashion. In Sorghum bicolor (Sorghum), this protein is Phytochrome a (PHYA).